We begin with the raw amino-acid sequence, 558 residues long: Polysialic acid transport protein KpsD (558 aa).

A signal peptide spans 1–20; that stretch reads MKLFKSILLIAACHAAQASA.

The protein to E.coli K1 KpsD.

It is found in the periplasm. Involved in the translocation of the polysialic acid capsule across the outer membrane to the cell surface. May function as the periplasmic binding element of the PSA transport system, in which it transiently interacts with the membrane component of the transporter, binds polysaccharide and transports the polymer to a component in the outer membrane. The chain is Polysialic acid transport protein KpsD (kpsD) from Escherichia coli.